A 295-amino-acid polypeptide reads, in one-letter code: Ethanolamine ammonia-lyase small subunit (295 aa).

3 residues coordinate adenosylcob(III)alamin: Val207, Glu228, and Cys258.

It belongs to the EutC family. The basic unit is a heterodimer which dimerizes to form tetramers. The heterotetramers trimerize; 6 large subunits form a core ring with 6 small subunits projecting outwards. Adenosylcob(III)alamin serves as cofactor.

It localises to the bacterial microcompartment. It carries out the reaction ethanolamine = acetaldehyde + NH4(+). It functions in the pathway amine and polyamine degradation; ethanolamine degradation. In terms of biological role, catalyzes the deamination of various vicinal amino-alcohols to oxo compounds. Allows this organism to utilize ethanolamine as the sole source of nitrogen and carbon in the presence of external vitamin B12. This Escherichia coli O139:H28 (strain E24377A / ETEC) protein is Ethanolamine ammonia-lyase small subunit.